The primary structure comprises 506 residues: uncharacterized protein (506 aa).

Disordered regions lie at residues 104–144 (PNSS…ATSS) and 397–456 (QQQK…DQLP). Positions 130–144 (ESSPTLSSSSLATSS) are enriched in low complexity. Residues 405–443 (IKDEDKNEKENKSENEEKEKEKEKEKEKEKEKEKEKEKE) are compositionally biased toward basic and acidic residues. The stretch at 405-455 (IKDEDKNEKENKSENEEKEKEKEKEKEKEKEKEKEKEKENEEGEEDNGDQL) forms a coiled coil.

This is an uncharacterized protein from Dictyostelium discoideum (Social amoeba).